The sequence spans 277 residues: Diaminopimelate epimerase (277 aa).

3 residues coordinate substrate: asparagine 15, glutamine 48, and asparagine 66. Cysteine 75 (proton donor) is an active-site residue. Residues 76–77 (GN), asparagine 156, asparagine 189, and 207–208 (ER) contribute to the substrate site. The active-site Proton acceptor is the cysteine 216. Residue 217 to 218 (GS) participates in substrate binding.

The protein belongs to the diaminopimelate epimerase family. In terms of assembly, homodimer.

Its subcellular location is the cytoplasm. The enzyme catalyses (2S,6S)-2,6-diaminopimelate = meso-2,6-diaminopimelate. The protein operates within amino-acid biosynthesis; L-lysine biosynthesis via DAP pathway; DL-2,6-diaminopimelate from LL-2,6-diaminopimelate: step 1/1. Catalyzes the stereoinversion of LL-2,6-diaminopimelate (L,L-DAP) to meso-diaminopimelate (meso-DAP), a precursor of L-lysine and an essential component of the bacterial peptidoglycan. This chain is Diaminopimelate epimerase, found in Acidiphilium cryptum (strain JF-5).